The primary structure comprises 324 residues: Acetyl-coenzyme A carboxylase carboxyl transferase subunit alpha (324 aa).

Residues 44-298 form the CoA carboxyltransferase C-terminal domain; sequence QLEAKATQLR…KTAIVKSLDD (255 aa).

Belongs to the AccA family. Acetyl-CoA carboxylase is a heterohexamer composed of biotin carboxyl carrier protein (AccB), biotin carboxylase (AccC) and two subunits each of ACCase subunit alpha (AccA) and ACCase subunit beta (AccD).

Its subcellular location is the cytoplasm. The enzyme catalyses N(6)-carboxybiotinyl-L-lysyl-[protein] + acetyl-CoA = N(6)-biotinyl-L-lysyl-[protein] + malonyl-CoA. It functions in the pathway lipid metabolism; malonyl-CoA biosynthesis; malonyl-CoA from acetyl-CoA: step 1/1. Component of the acetyl coenzyme A carboxylase (ACC) complex. First, biotin carboxylase catalyzes the carboxylation of biotin on its carrier protein (BCCP) and then the CO(2) group is transferred by the carboxyltransferase to acetyl-CoA to form malonyl-CoA. This Trichodesmium erythraeum (strain IMS101) protein is Acetyl-coenzyme A carboxylase carboxyl transferase subunit alpha.